The chain runs to 340 residues: Tetraacyldisaccharide 4'-kinase (340 aa).

50 to 57 (HGGGAGKT) provides a ligand contact to ATP.

Belongs to the LpxK family.

The enzyme catalyses a lipid A disaccharide + ATP = a lipid IVA + ADP + H(+). It functions in the pathway glycolipid biosynthesis; lipid IV(A) biosynthesis; lipid IV(A) from (3R)-3-hydroxytetradecanoyl-[acyl-carrier-protein] and UDP-N-acetyl-alpha-D-glucosamine: step 6/6. Its function is as follows. Transfers the gamma-phosphate of ATP to the 4'-position of a tetraacyldisaccharide 1-phosphate intermediate (termed DS-1-P) to form tetraacyldisaccharide 1,4'-bis-phosphate (lipid IVA). This Rhodopseudomonas palustris (strain BisA53) protein is Tetraacyldisaccharide 4'-kinase.